Here is a 187-residue protein sequence, read N- to C-terminus: Threonylcarbamoyl-AMP synthase (187 aa).

The region spanning Asn-3–Arg-187 is the YrdC-like domain.

It belongs to the SUA5 family. TsaC subfamily.

It localises to the cytoplasm. It carries out the reaction L-threonine + hydrogencarbonate + ATP = L-threonylcarbamoyladenylate + diphosphate + H2O. Its function is as follows. Required for the formation of a threonylcarbamoyl group on adenosine at position 37 (t(6)A37) in tRNAs that read codons beginning with adenine. Catalyzes the conversion of L-threonine, HCO(3)(-)/CO(2) and ATP to give threonylcarbamoyl-AMP (TC-AMP) as the acyladenylate intermediate, with the release of diphosphate. This chain is Threonylcarbamoyl-AMP synthase, found in Riesia pediculicola (strain USDA).